The sequence spans 209 residues: Octanoyltransferase (209 aa).

The BPL/LPL catalytic domain maps to 30–209 (DHKPEIIYLV…IQTEFNKIFK (180 aa)). Substrate-binding positions include 69-76 (RGGKFTFH), 143-145 (AIG), and 156-158 (GVA). Cysteine 174 serves as the catalytic Acyl-thioester intermediate.

The protein belongs to the LipB family.

The protein localises to the cytoplasm. It catalyses the reaction octanoyl-[ACP] + L-lysyl-[protein] = N(6)-octanoyl-L-lysyl-[protein] + holo-[ACP] + H(+). The protein operates within protein modification; protein lipoylation via endogenous pathway; protein N(6)-(lipoyl)lysine from octanoyl-[acyl-carrier-protein]: step 1/2. Its function is as follows. Catalyzes the transfer of endogenously produced octanoic acid from octanoyl-acyl-carrier-protein onto the lipoyl domains of lipoate-dependent enzymes. Lipoyl-ACP can also act as a substrate although octanoyl-ACP is likely to be the physiological substrate. In Rickettsia conorii (strain ATCC VR-613 / Malish 7), this protein is Octanoyltransferase.